Reading from the N-terminus, the 729-residue chain is Fatty acid oxidation complex subunit alpha (729 aa).

Positions 1 to 189 (MLYKGDTLYL…KIGLVDGVVK (189 aa)) are enoyl-CoA hydratase/isomerase. Aspartate 296 contacts substrate. Residues 311–729 (ETPKQAAVLG…ARPVGDLKTA (419 aa)) form a 3-hydroxyacyl-CoA dehydrogenase region. Residues methionine 324, aspartate 343, 400 to 402 (VVE), lysine 407, and serine 429 each bind NAD(+). Histidine 450 serves as the catalytic For 3-hydroxyacyl-CoA dehydrogenase activity. Asparagine 453 lines the NAD(+) pocket. Asparagine 500 and tyrosine 660 together coordinate substrate. The tract at residues 708-729 (RHNEPYYPPVEPARPVGDLKTA) is disordered.

In the N-terminal section; belongs to the enoyl-CoA hydratase/isomerase family. This sequence in the C-terminal section; belongs to the 3-hydroxyacyl-CoA dehydrogenase family. Heterotetramer of two alpha chains (FadB) and two beta chains (FadA).

The enzyme catalyses a (3S)-3-hydroxyacyl-CoA + NAD(+) = a 3-oxoacyl-CoA + NADH + H(+). It catalyses the reaction a (3S)-3-hydroxyacyl-CoA = a (2E)-enoyl-CoA + H2O. It carries out the reaction a 4-saturated-(3S)-3-hydroxyacyl-CoA = a (3E)-enoyl-CoA + H2O. The catalysed reaction is (3S)-3-hydroxybutanoyl-CoA = (3R)-3-hydroxybutanoyl-CoA. The enzyme catalyses a (3Z)-enoyl-CoA = a 4-saturated (2E)-enoyl-CoA. It catalyses the reaction a (3E)-enoyl-CoA = a 4-saturated (2E)-enoyl-CoA. Its pathway is lipid metabolism; fatty acid beta-oxidation. In terms of biological role, involved in the aerobic and anaerobic degradation of long-chain fatty acids via beta-oxidation cycle. Catalyzes the formation of 3-oxoacyl-CoA from enoyl-CoA via L-3-hydroxyacyl-CoA. It can also use D-3-hydroxyacyl-CoA and cis-3-enoyl-CoA as substrate. The protein is Fatty acid oxidation complex subunit alpha of Escherichia coli O17:K52:H18 (strain UMN026 / ExPEC).